A 1012-amino-acid chain; its full sequence is Axonemal dynein light chain domain-containing protein 1 (1012 aa).

Residues 1–17 show a composition bias toward low complexity; it reads MSLPKTPSTPLNSTSTS. The interval 1–34 is disordered; that stretch reads MSLPKTPSTPLNSTSTSESKKLKVSVAKEGTRGL. 3 coiled-coil regions span residues 317–402, 447–486, and 572–597; these read QRIL…IWSS, EDLALLQKLTQKWRNLVNKLKQEVEQMEESTSETLKIVKD, and SERQYMEEIIKNIQKLYKEYEIRING. Residues 841 to 854 are compositionally biased toward acidic residues; that stretch reads PEIDESFKEDEEES. Disordered stretches follow at residues 841 to 879 and 963 to 1012; these read PEIDESFKEDEEESKEDRKLQEENKERAEEQPSTSTEKE and LEEL…KKGH. Composition is skewed to basic and acidic residues over residues 855 to 879 and 963 to 987; these read KEDRKLQEENKERAEEQPSTSTEKE and LEELVMTSRKESKEEKENQDEREVK. The segment covering 988-997 has biased composition (acidic residues); it reads EEEEQQEEEE.

In terms of tissue distribution, highly expressed in testis. Highly expressed in the round and late spermatids.

The protein localises to the cytoplasm. May be essential for spermiogenesis and male fertility probably by regulating the manchette dynamics, spermatid head shaping and sperm flagellum assembly. The protein is Axonemal dynein light chain domain-containing protein 1 of Homo sapiens (Human).